The primary structure comprises 342 residues: Prostasin (342 aa).

A signal peptide spans 1 to 29 (MAPRVGLGLGQLEAVTILLLLGLLQSGIR). Positions 30–32 (ADG) are cleaved as a propeptide — activation peptide. Cystine bridges form between C37–C154 and C70–C86. In terms of domain architecture, Peptidase S1 spans 45–286 (ITGGGSAKPG…YASWIHHHVA (242 aa)). H85 functions as the Charge relay system in the catalytic mechanism. A glycan (N-linked (GlcNAc...) asparagine) is linked at N110. The active-site Charge relay system is D134. N-linked (GlcNAc...) asparagine glycosylation is present at N159. Intrachain disulfides connect C168/C244, C201/C223, and C234/C262. S238 acts as the Charge relay system in catalysis. Residues 320-340 (LLRPVLFLPLGLTLGLLSLWL) traverse the membrane as a helical segment. Residues 323–342 (PVLFLPLGLTLGLLSLWLEH) constitute a propeptide that is removed on maturation.

It belongs to the peptidase S1 family. In terms of assembly, heterodimer of two chains, light and heavy, held by a disulfide bond.

The protein localises to the cell membrane. It localises to the secreted. The protein resides in the extracellular space. Its function is as follows. Possesses a trypsin-like cleavage specificity with a preference for poly-basic substrates. Stimulates epithelial sodium channel (ENaC) activity through activating cleavage of the gamma subunits (SCNN1G). In Mus musculus (Mouse), this protein is Prostasin (Prss8).